The sequence spans 320 residues: Methionyl-tRNA formyltransferase (320 aa).

A (6S)-5,6,7,8-tetrahydrofolate-binding site is contributed by 114–117 (SLLP).

It belongs to the Fmt family.

The enzyme catalyses L-methionyl-tRNA(fMet) + (6R)-10-formyltetrahydrofolate = N-formyl-L-methionyl-tRNA(fMet) + (6S)-5,6,7,8-tetrahydrofolate + H(+). Functionally, attaches a formyl group to the free amino group of methionyl-tRNA(fMet). The formyl group appears to play a dual role in the initiator identity of N-formylmethionyl-tRNA by promoting its recognition by IF2 and preventing the misappropriation of this tRNA by the elongation apparatus. The sequence is that of Methionyl-tRNA formyltransferase from Acinetobacter baumannii (strain ACICU).